The primary structure comprises 556 residues: Pumilio homolog 11 (556 aa).

One can recognise a PUM-HD domain in the interval 215-556; sequence GGSRELDGSA…RIFSKNLWKK (342 aa). 8 Pumilio repeats span residues 238 to 276, 277 to 313, 316 to 351, 353 to 388, 389 to 424, 425 to 459, 460 to 495, and 496 to 531; these read SMVD…IIFK, EVIN…ILIR, SKPG…SLVK, ALVP…FILE, AATK…KLVD, EISR…VLFE, LRGN…VNEL, and VSVL…SLVE.

It localises to the cytoplasm. Functionally, sequence-specific RNA-binding protein that regulates translation and mRNA stability by binding the 3'-UTR of target mRNAs. In Arabidopsis thaliana (Mouse-ear cress), this protein is Pumilio homolog 11 (APUM11).